Here is a 192-residue protein sequence, read N- to C-terminus: UPF0301 protein BTH_I1462 (192 aa).

Belongs to the UPF0301 (AlgH) family.

The chain is UPF0301 protein BTH_I1462 from Burkholderia thailandensis (strain ATCC 700388 / DSM 13276 / CCUG 48851 / CIP 106301 / E264).